A 1641-amino-acid chain; its full sequence is Lysine-specific demethylase 6B (1641 aa).

4 disordered regions span residues 42 to 89 (LPGG…LHGK), 188 to 682 (YGAK…PLED), 704 to 808 (LDES…LLKS), and 824 to 1085 (GAAV…VSRA). Over residues 214–223 (LSGPSGEEGL) the composition is skewed to low complexity. Ser224 carries the post-translational modification Phosphoserine. Residues 242–268 (PGLPLPPPPPPPPPPPPPPPPPPPPLP) are compositionally biased toward pro residues. Residues 293–309 (GPERKGSAPPERQEQRH) show a composition bias toward basic and acidic residues. The span at 312-326 (PHSYPYPAPAYSAHP) shows a compositional bias: low complexity. The span at 361 to 372 (DLRESRVQRSRM) shows a compositional bias: basic and acidic residues. Low complexity predominate over residues 396-415 (PGTSSSSSSSSSSNNTGLRG). The segment covering 467 to 488 (PGTPSSPPPPCPRLLRPPPPPA) has biased composition (pro residues). The segment covering 552-568 (TTTSSSSSSNSHSSSPT) has biased composition (low complexity). Pro residues-rich tracts occupy residues 597 to 613 (QDPPLPPLTLALPPAPP) and 645 to 660 (GPPPGPVSKAPQPVPP). Basic and acidic residues predominate over residues 704–713 (LDESIRKEEE). Low complexity predominate over residues 743 to 766 (TAPATTTAAPTTATTTTTTTTTTT). A compositionally biased stretch (pro residues) spans 774-801 (PPALPPPPPLAKFPPPPQPQPPPPPPAS). A compositionally biased stretch (low complexity) spans 855 to 879 (VAPSAQGSPKPSVSSSSQFSTSGGP). Residues 891–908 (APGPVTPAQLPPPLPLPP) are compositionally biased toward pro residues. Positions 918–931 (EISRACETLVERVG) are enriched in basic and acidic residues. Basic residues predominate over residues 974–987 (GKRRQKEHRRHRRA). Basic and acidic residues predominate over residues 988–1001 (CRDSVGRRPREGRA). The segment covering 1002-1014 (KAKAKAPKEKSRR) has biased composition (basic residues). Residues 1047-1066 (APAPPPAPAPAAQPTPPSAP) are compositionally biased toward pro residues. Residue Lys1107 forms a Glycyl lysine isopeptide (Lys-Gly) (interchain with G-Cter in SUMO2) linkage. The tract at residues 1286–1323 (FQESLQEERESEDEESEEPDSTTGTSPSSAPDPKNHHI) is disordered. A compositionally biased stretch (acidic residues) spans 1294-1305 (RESEDEESEEPD). The segment covering 1306–1317 (STTGTSPSSAPD) has biased composition (low complexity). In terms of domain architecture, JmjC spans 1337–1500 (RWKPQLQELL…YQLALERYEW (164 aa)). Fe cation contacts are provided by His1388, Glu1390, and His1468. 4 residues coordinate Zn(2+): Cys1573, Cys1576, Cys1600, and Cys1603.

The protein belongs to the UTX family. Interacts with TLE1. Component of the MLL4 complex, at least composed of KMT2B/MLL4, ASH2L, RBBP5, WDR5, and KDM6B. Interacts with TBX21, SMARCA4, SMARCC1 and SMARCC2. Requires L-ascorbate as cofactor. Fe(2+) is required as a cofactor.

It is found in the nucleus. It catalyses the reaction N(6),N(6),N(6)-trimethyl-L-lysyl(27)-[histone H3] + 2 2-oxoglutarate + 2 O2 = N(6)-methyl-L-lysyl(27)-[histone H3] + 2 formaldehyde + 2 succinate + 2 CO2. Histone demethylase that specifically demethylates 'Lys-27' of histone H3, thereby playing a central role in histone code. Demethylates trimethylated and dimethylated H3 'Lys-27'. Plays a central role in regulation of posterior development, by regulating HOX gene expression. Involved in inflammatory response by participating in macrophage differentiation in case of inflammation by regulating gene expression and macrophage differentiation. Plays a demethylase-independent role in chromatin remodeling to regulate T-box family member-dependent gene expression by acting as a link between T-box factors and the SMARCA4-containing SWI/SNF remodeling complex. The chain is Lysine-specific demethylase 6B (Kdm6b) from Mus musculus (Mouse).